The chain runs to 147 residues: E3 ubiquitin-protein ligase RNF181 homolog (147 aa).

The RING-type; atypical zinc-finger motif lies at 70-111 (CSVCKEPAEEGQKYRILPCKHEFHEECILLWLKKTNSCPLCR).

This sequence belongs to the RNF181 family.

It catalyses the reaction S-ubiquitinyl-[E2 ubiquitin-conjugating enzyme]-L-cysteine + [acceptor protein]-L-lysine = [E2 ubiquitin-conjugating enzyme]-L-cysteine + N(6)-ubiquitinyl-[acceptor protein]-L-lysine.. It functions in the pathway protein modification; protein ubiquitination. Its function is as follows. E3 ubiquitin-protein ligase which accepts ubiquitin from an E2 ubiquitin-conjugating enzyme in the form of a thioester and then directly transfers the ubiquitin to targeted substrates. The polypeptide is E3 ubiquitin-protein ligase RNF181 homolog (Drosophila melanogaster (Fruit fly)).